Here is a 241-residue protein sequence, read N- to C-terminus: Xyloglucan-specific endo-beta-1,4-glucanase 1 (241 aa).

A signal peptide spans 1 to 19 (MKGLLAGTIAAATFAVASA). Residue glutamate 136 is part of the active site. Asparagine 174 and asparagine 190 each carry an N-linked (GlcNAc...) asparagine glycan. Glutamate 222 is a catalytic residue.

Belongs to the glycosyl hydrolase 12 (cellulase H) family. Interacts with host apoplastic glucanase inhibitor GIP2.

It carries out the reaction xyloglucan + H2O = xyloglucan oligosaccharides.. Its activity is regulated as follows. The xyloglucanase activity is inhibited by the binding of the host apoplastic glucanase inhibitor GIP2. In terms of biological role, glycoside hydrolase that exhibits xyloglucanase activity. Acts as an important virulence factor during P.parasitica infection of its host Nicotiana benthamiana. Also acts as a pathogen-associated molecular pattern (PAMP) in host species, where it can trigger defense responses including cell death. The PAMP activity is independent of its xyloglucanase activity. With paralog XLP1, is required to elevate apoplastic sugar during P.parasitica infection. This Phytophthora nicotianae (strain INRA-310) (Phytophthora parasitica) protein is Xyloglucan-specific endo-beta-1,4-glucanase 1.